We begin with the raw amino-acid sequence, 117 residues long: 5-hydroxyisourate hydrolase (117 aa).

Substrate contacts are provided by His-7, Arg-45, and Tyr-114.

This sequence belongs to the transthyretin family. 5-hydroxyisourate hydrolase subfamily. Homotetramer.

It catalyses the reaction 5-hydroxyisourate + H2O = 5-hydroxy-2-oxo-4-ureido-2,5-dihydro-1H-imidazole-5-carboxylate + H(+). Catalyzes the hydrolysis of 5-hydroxyisourate (HIU) to 2-oxo-4-hydroxy-4-carboxy-5-ureidoimidazoline (OHCU). In Ralstonia nicotianae (strain ATCC BAA-1114 / GMI1000) (Ralstonia solanacearum), this protein is 5-hydroxyisourate hydrolase.